Here is a 1198-residue protein sequence, read N- to C-terminus: Fibronectin type-III domain-containing protein 3A (1198 aa).

Residues 188 to 201 (KKLKDRQGTQKDKM) show a composition bias toward basic and acidic residues. Residues 188 to 257 (KKLKDRQGTQ…VDPEMEEKDE (70 aa)) form a disordered region. A phosphoserine mark is found at Ser-203, Ser-207, and Ser-213. 9 consecutive Fibronectin type-III domains span residues 268-369 (NIVK…TLSC), 373-465 (PPNA…TSGC), 469-562 (VPAS…TCPD), 566-660 (VPVK…TPAV), 664-757 (PCLP…TAPG), 761-851 (QCRP…TPPS), 863-950 (SDDD…TKPL), 951-1045 (PPDP…TPKS), and 1049-1151 (ALKA…TEPP). Lys-384 carries the post-translational modification N6-acetyllysine. The chain crosses the membrane as a helical span at residues 1177–1197 (ILVVFAFFSILIAFIIQYFVI).

The protein belongs to the FNDC3 family. As to expression, testis. Localizes to the acrosome of spermatids, as well as to Leydig cells. Can be detected on the acrosome beginning at steps 2-3 and continuing until step 12 of spermiogenesis.

The protein localises to the golgi apparatus membrane. Its function is as follows. Mediates spermatid-Sertoli adhesion during spermatogenesis. The sequence is that of Fibronectin type-III domain-containing protein 3A (Fndc3a) from Mus musculus (Mouse).